The chain runs to 31 residues: Cytochrome b6-f complex subunit 6 (31 aa).

A helical transmembrane segment spans residues 4-24 (LLSYFAFLMLALTFTLALFVG).

It belongs to the PetL family. In terms of assembly, the 4 large subunits of the cytochrome b6-f complex are cytochrome b6, subunit IV (17 kDa polypeptide, PetD), cytochrome f and the Rieske protein, while the 4 small subunits are PetG, PetL, PetM and PetN. The complex functions as a dimer.

The protein resides in the plastid. It is found in the chloroplast thylakoid membrane. Component of the cytochrome b6-f complex, which mediates electron transfer between photosystem II (PSII) and photosystem I (PSI), cyclic electron flow around PSI, and state transitions. PetL is important for photoautotrophic growth as well as for electron transfer efficiency and stability of the cytochrome b6-f complex. This is Cytochrome b6-f complex subunit 6 from Adiantum capillus-veneris (Maidenhair fern).